The primary structure comprises 1092 residues: Leukemia inhibitory factor receptor (1092 aa).

An N-terminal signal peptide occupies residues methionine 1–glycine 43. Topologically, residues leucine 44–serine 828 are extracellular. In terms of domain architecture, Fibronectin type-III 1 spans lysine 45–aspartate 126. Disulfide bonds link cysteine 53–cysteine 63 and cysteine 80–cysteine 88. 4 N-linked (GlcNAc...) asparagine glycosylation sites follow: asparagine 164, asparagine 199, asparagine 238, and asparagine 261. Cystine bridges form between cysteine 208–cysteine 265 and cysteine 336–cysteine 346. 5 Fibronectin type-III domains span residues valine 330 to histidine 429, aspartate 430 to threonine 529, glycine 533 to aspartate 624, proline 622 to valine 714, and proline 719 to serine 828. Residues asparagine 385, asparagine 402, asparagine 421, asparagine 440, asparagine 453, and asparagine 476 are each glycosylated (N-linked (GlcNAc...) asparagine). Cysteine 461 and cysteine 506 are oxidised to a cystine. Residues tryptophan 514 to serine 518 carry the WSXWS motif motif. Asparagine 567, asparagine 647, asparagine 658, asparagine 675, asparagine 724, and asparagine 782 each carry an N-linked (GlcNAc...) asparagine glycan. The chain crosses the membrane as a helical span at residues valine 829 to cysteine 853. At tyrosine 854 to aspartate 1092 the chain is on the cytoplasmic side. Positions phenylalanine 864–glutamate 872 match the Box 1 motif motif. Phosphoserine occurs at positions 922 and 1039. Residues glutamate 1009 to aspartate 1092 are disordered. 2 stretches are compositionally biased toward polar residues: residues alanine 1027–glutamine 1062 and serine 1081–aspartate 1092.

Belongs to the type I cytokine receptor family. Type 2 subfamily. In terms of assembly, heterodimer composed of LIFR and IL6ST. The heterodimer formed by LIFR and IL6ST interacts with the complex formed by CNTF and CNTFR. As to expression, placenta, liver, kidney, heart, lung, brain, and embryos. The liver may be the primary site of synthesis of the secreted form.

Its subcellular location is the cell membrane. The protein localises to the secreted. Functionally, signal-transducing molecule. May have a common pathway with IL6ST. The soluble form inhibits the biological activity of LIF by blocking its binding to receptors on target cells. This chain is Leukemia inhibitory factor receptor (Lifr), found in Mus musculus (Mouse).